Consider the following 578-residue polypeptide: Maltogenic alpha-amylase (578 aa).

It belongs to the glycosyl hydrolase 13 family.

It catalyses the reaction hydrolysis of (1-&gt;4)-alpha-D-glucosidic linkages in polysaccharides so as to remove successive alpha-maltose residues from the non-reducing ends of the chains.. Converts starch into maltose. In contrary to other maltogenic alpha-amylases BlmA cannot hydrolyze 1,4-alpha-glucosidic linkage next to 1,6-alpha-glucosidic linkages. In Bacillus licheniformis, this protein is Maltogenic alpha-amylase (blmA).